Consider the following 278-residue polypeptide: Small ribosomal subunit protein uS3 (278 aa).

Residues 39–107 (LRKAIAKKYV…KVQLNIVEIS (69 aa)) enclose the KH type-2 domain. Residues 244 to 278 (AKPKRVTKKAEAEASAEEKPKRAAKKAENITKEEE) form a disordered region. Over residues 251-278 (KKAEAEASAEEKPKRAAKKAENITKEEE) the composition is skewed to basic and acidic residues.

The protein belongs to the universal ribosomal protein uS3 family. Part of the 30S ribosomal subunit. Forms a tight complex with proteins S10 and S14.

Functionally, binds the lower part of the 30S subunit head. Binds mRNA in the 70S ribosome, positioning it for translation. The chain is Small ribosomal subunit protein uS3 from Dehalococcoides mccartyi (strain ATCC BAA-2266 / KCTC 15142 / 195) (Dehalococcoides ethenogenes (strain 195)).